The following is a 327-amino-acid chain: Elongation factor P--(R)-beta-lysine ligase (327 aa).

Substrate is bound at residue 78–80 (SPE). ATP contacts are provided by residues 102–104 (RNQ) and Asn-111. Residue Tyr-120 participates in substrate binding. Position 246 to 247 (246 to 247 (EL)) interacts with ATP. Glu-253 serves as a coordination point for substrate. Residue Gly-302 coordinates ATP.

Belongs to the class-II aminoacyl-tRNA synthetase family. EpmA subfamily. As to quaternary structure, homodimer.

It catalyses the reaction D-beta-lysine + L-lysyl-[protein] + ATP = N(6)-((3R)-3,6-diaminohexanoyl)-L-lysyl-[protein] + AMP + diphosphate + H(+). Functionally, with EpmB is involved in the beta-lysylation step of the post-translational modification of translation elongation factor P (EF-P). Catalyzes the ATP-dependent activation of (R)-beta-lysine produced by EpmB, forming a lysyl-adenylate, from which the beta-lysyl moiety is then transferred to the epsilon-amino group of a conserved specific lysine residue in EF-P. This Baumannia cicadellinicola subsp. Homalodisca coagulata protein is Elongation factor P--(R)-beta-lysine ligase.